Here is a 357-residue protein sequence, read N- to C-terminus: MTNPSAGTLTIERKQSHVELCLHANVAFSGKTTGFERFYFEHNALPEIAFAEIDCSTTFLGRHIGAPLMVSSMTGGYSEASTLNRQLAEAAEHFQIPLGVGSMRQTLESPLHRESFAVTRKYAPTTLLFANIGAPEVAQGLSQSDVAMMLDLLRADGLIVHLNAAQELFQPEGNTNFHRVLEEIHNLCATTNVPIIVKEVGNGIGAAVAEQLMEAGVQALDVAGAGGISWQKVEEYRFLQQFGHEHRFSSNALDELLNWGIPTTNCLLDIAELKRLQPQFQQIEIIASGGVSSGMDVAKSLAMGAQLAASARHLLHALHAGTLTATIEQWLNDLKAAMFLTGAATVDALRTKSLLNH.

13-14 (RK) is a substrate binding site. FMN-binding positions include Ser-71, 72 to 74 (SMT), Ser-102, and Asn-131. Residue 102–104 (SMR) participates in substrate binding. Substrate is bound at residue Gln-166. Residue Glu-167 participates in Mg(2+) binding. FMN contacts are provided by residues Lys-198 and 311-312 (AR).

Belongs to the IPP isomerase type 2 family. As to quaternary structure, homooctamer. Dimer of tetramers. FMN is required as a cofactor. Requires NADPH as cofactor. Mg(2+) serves as cofactor.

It localises to the cytoplasm. The enzyme catalyses isopentenyl diphosphate = dimethylallyl diphosphate. Involved in the biosynthesis of isoprenoids. Catalyzes the 1,3-allylic rearrangement of the homoallylic substrate isopentenyl (IPP) to its allylic isomer, dimethylallyl diphosphate (DMAPP). The chain is Isopentenyl-diphosphate delta-isomerase from Chlorobium chlorochromatii (strain CaD3).